A 295-amino-acid chain; its full sequence is MTKQIQKTVSVCIIGRPNSGKSTLLNRIIGEKLSIVTPKVQTTRSIITGIITLNDTQIILYDTPGIFEPKGTLEKAMVRCAWSSLHSADIVMLIIDSLKPLDSITHDILNKLRSLNVVPVFLLNKIDVESKYIDDTKAFLAENYSDSLLFPISAISGENVDKLLEYITSKAKIAPWLYEEDDITDLPMRFIAAEITREQLFLGLQQELPYKLTVQTEKWEELKDKSVKINQIIVVSRESYKTIILGKNGSKIKELGAKSRMQMQQFFGFPVHLFLFVKVRELWEDNSDYYEYMKI.

The Era-type G domain occupies 7 to 176 (KTVSVCIIGR…ITSKAKIAPW (170 aa)). A G1 region spans residues 15–22 (GRPNSGKS). Position 15 to 22 (15 to 22 (GRPNSGKS)) interacts with GTP. Positions 41-45 (QTTRS) are G2. A G3 region spans residues 62–65 (DTPG). GTP is bound by residues 62 to 66 (DTPGI) and 124 to 127 (NKID). The tract at residues 124 to 127 (NKID) is G4. Residues 152-154 (ISA) are G5. Positions 204–281 (LQQELPYKLT…HLFLFVKVRE (78 aa)) constitute a KH type-2 domain.

Belongs to the TRAFAC class TrmE-Era-EngA-EngB-Septin-like GTPase superfamily. Era GTPase family. As to quaternary structure, monomer.

It localises to the cytoplasm. It is found in the cell inner membrane. Its function is as follows. An essential GTPase that binds both GDP and GTP, with rapid nucleotide exchange. Plays a role in 16S rRNA processing and 30S ribosomal subunit biogenesis and possibly also in cell cycle regulation and energy metabolism. The protein is GTPase Era of Rickettsia bellii (strain OSU 85-389).